The chain runs to 493 residues: Matrilin-1 (493 aa).

The N-terminal stretch at 1 to 23 is a signal peptide; the sequence is MDGIFCALPLSLLLLLQSCGVWG. The region spanning 24 to 220 is the VWFA 1 domain; the sequence is APPQPRGTLC…THKFQEAFCV (197 aa). A glycan (N-linked (GlcNAc...) asparagine) is linked at Asn74. Residues 221-261 enclose the EGF-like domain; sequence VSDLCATGDHDCEQICISTPGSYKCACKEGFTLNNDGKTCS. Cystine bridges form between Cys225–Cys236, Cys232–Cys245, and Cys247–Cys260. In terms of domain architecture, VWFA 2 spans 262–450; sequence ACSGGSGSAL…GKKLQMKICV (189 aa). Residues 462–492 adopt a coiled-coil conformation; it reads KFQTKVEELINTLQQKLEAVAKRIEALENKI.

As to quaternary structure, homotrimer. Expressed in xyphoid cartilage and chondrocytes (at protein level).

It localises to the secreted. It is found in the extracellular space. The protein resides in the extracellular matrix. In terms of biological role, a major component of the extracellular matrix of non-articular cartilage. Binds to type 2 collagens and forms long concatenated protein networks as part of the extracellular matrix. Required for the network-like organization and bundling of collagen fibrils surrounding chondrocytes in the zones of maturation and hypertrophy. Required for mechanotransduction and adaption to mechanical loading in cartilage chondrocytes, resulting in an increase in expression of the extracellular matrix components ACAN and COL2A1. Acts as a moderator of angiogenesis in response to injury. The chain is Matrilin-1 from Gallus gallus (Chicken).